The chain runs to 258 residues: Hydroxyacylglutathione hydrolase (258 aa).

His-52, His-54, Asp-56, His-57, His-109, Asp-126, and His-164 together coordinate Zn(2+).

The protein belongs to the metallo-beta-lactamase superfamily. Glyoxalase II family. In terms of assembly, monomer. Zn(2+) is required as a cofactor.

It catalyses the reaction an S-(2-hydroxyacyl)glutathione + H2O = a 2-hydroxy carboxylate + glutathione + H(+). The protein operates within secondary metabolite metabolism; methylglyoxal degradation; (R)-lactate from methylglyoxal: step 2/2. Its function is as follows. Thiolesterase that catalyzes the hydrolysis of S-D-lactoyl-glutathione to form glutathione and D-lactic acid. This is Hydroxyacylglutathione hydrolase from Xylella fastidiosa (strain 9a5c).